The chain runs to 546 residues: Mercuric reductase (546 aa).

Positions 2–66 (NKFKVNISGM…AIDEANYQAG (65 aa)) constitute an HMA domain. Positions 13 and 16 each coordinate a metal cation. The FAD site is built by Ala-96, Gly-116, and Thr-121. The cysteines at positions 122 and 127 are disulfide-linked. FAD contacts are provided by Lys-131 and Ala-195. Residues 256–263 (GSGYIGME) and Gly-346 each bind NAD(+). The FAD site is built by Asp-387 and Val-395. The Hg(2+) site is built by Cys-543 and Cys-544.

It belongs to the class-I pyridine nucleotide-disulfide oxidoreductase family. In terms of assembly, homodimer. The cofactor is FAD.

It carries out the reaction Hg + NADP(+) + H(+) = Hg(2+) + NADPH. With respect to regulation, uses NADPH as the preferred electron donor, but shows slight activity with NADH as well. Inhibited by Cu(2+), Cd(2+), Zn(2+) and Co(2+), with Cu(2+) showing the strongest inhibition. Enzyme activity is enhanced by b-mercaptoethanol and NaCl up to concentrations of 500 uM and 100 mM respectively, followed by inhibition at higher concentrations. In terms of biological role, resistance to Hg(2+) in bacteria appears to be governed by a specialized system which includes mercuric reductase. MerA protein is responsible for volatilizing mercury as Hg(0). Catalyzes reduction of Hg(2+) to elemental Hg, which is volatile and can diffuse out of cells passively. Plays a pivotal role in mercury resistance and cell protection. The chain is Mercuric reductase from Lysinibacillus sphaericus (Bacillus sphaericus).